The chain runs to 147 residues: Small ribosomal subunit protein uS12 (147 aa).

It belongs to the universal ribosomal protein uS12 family. In terms of assembly, part of the 30S ribosomal subunit.

Its function is as follows. With S4 and S5 plays an important role in translational accuracy. Located at the interface of the 30S and 50S subunits. The polypeptide is Small ribosomal subunit protein uS12 (Pyrobaculum islandicum (strain DSM 4184 / JCM 9189 / GEO3)).